Consider the following 571-residue polypeptide: Putative phospholipase B-like 1 (571 aa).

Positions 1–18 (MNWIFIFLAAAVAIGCEA) are cleaved as a signal peptide. Asparagine 62, asparagine 149, asparagine 442, and asparagine 473 each carry an N-linked (GlcNAc...) asparagine glycan.

This sequence belongs to the phospholipase B-like family.

It localises to the lysosome. Functionally, putative phospholipase. The chain is Putative phospholipase B-like 1 from Caenorhabditis elegans.